The sequence spans 844 residues: Janus kinase and microtubule-interacting protein 3 (844 aa).

Residues 8-259 (SRAKGDKAET…LSQAKEAERH (252 aa)) are a coiled coil. The tract at residues 249 to 290 (QLSQAKEAERHPGSPRRELPYASGAGDASDHSGSPEQQLDEK) is disordered. Residues 254–267 (KEAERHPGSPRREL) show a composition bias toward basic and acidic residues. Over residues 270–282 (ASGAGDASDHSGS) the composition is skewed to low complexity. Residues 289-421 (EKDARRFQLK…DELSKTLETA (133 aa)) adopt a coiled-coil conformation. The residue at position 384 (Ser384) is a Phosphoserine. Polar residues predominate over residues 466–483 (SDGSSISYQTDRTDQTPC). The disordered stretch occupies residues 466–488 (SDGSSISYQTDRTDQTPCTPEDD). 2 coiled-coil regions span residues 493-621 (MAKE…RERK) and 688-833 (EKWL…LFLF).

Belongs to the JAKMIP family.

It localises to the golgi apparatus. This chain is Janus kinase and microtubule-interacting protein 3 (Jakmip3), found in Mus musculus (Mouse).